A 95-amino-acid polypeptide reads, in one-letter code: Protein TusB (95 aa).

The protein belongs to the DsrH/TusB family. Heterohexamer, formed by a dimer of trimers. The hexameric TusBCD complex contains 2 copies each of TusB, TusC and TusD. The TusBCD complex interacts with TusE.

The protein localises to the cytoplasm. Its function is as follows. Part of a sulfur-relay system required for 2-thiolation of 5-methylaminomethyl-2-thiouridine (mnm(5)s(2)U) at tRNA wobble positions. This chain is Protein TusB, found in Klebsiella pneumoniae (strain 342).